The primary structure comprises 248 residues: Pyridoxine 5'-phosphate synthase (248 aa).

3-amino-2-oxopropyl phosphate is bound at residue Asn9. 11–12 contributes to the 1-deoxy-D-xylulose 5-phosphate binding site; sequence DH. Arg20 serves as a coordination point for 3-amino-2-oxopropyl phosphate. Catalysis depends on His45, which acts as the Proton acceptor. Arg47 and His52 together coordinate 1-deoxy-D-xylulose 5-phosphate. Residue Glu72 is the Proton acceptor of the active site. 1-deoxy-D-xylulose 5-phosphate is bound at residue Thr102. Residue His193 is the Proton donor of the active site. Residues Gly194 and 215–216 each bind 3-amino-2-oxopropyl phosphate; that span reads GH.

The protein belongs to the PNP synthase family. In terms of assembly, homooctamer; tetramer of dimers.

The protein resides in the cytoplasm. The catalysed reaction is 3-amino-2-oxopropyl phosphate + 1-deoxy-D-xylulose 5-phosphate = pyridoxine 5'-phosphate + phosphate + 2 H2O + H(+). The protein operates within cofactor biosynthesis; pyridoxine 5'-phosphate biosynthesis; pyridoxine 5'-phosphate from D-erythrose 4-phosphate: step 5/5. In terms of biological role, catalyzes the complicated ring closure reaction between the two acyclic compounds 1-deoxy-D-xylulose-5-phosphate (DXP) and 3-amino-2-oxopropyl phosphate (1-amino-acetone-3-phosphate or AAP) to form pyridoxine 5'-phosphate (PNP) and inorganic phosphate. This is Pyridoxine 5'-phosphate synthase from Hydrogenovibrio crunogenus (strain DSM 25203 / XCL-2) (Thiomicrospira crunogena).